A 382-amino-acid chain; its full sequence is Gap junction alpha-1 protein (382 aa).

The Cytoplasmic segment spans residues 2–23; sequence GDWSALGKLLDKVQAYSTAGGK. A Phosphoserine modification is found at S5. A helical transmembrane segment spans residues 24–44; that stretch reads VWLSVLFIFRILLLGTAVESA. Over 45-76 the chain is Extracellular; sequence WGDEQSAFRCNTQQPGCENVCYDKSFPISHVR. 2 cysteine pairs are disulfide-bonded: C54–C192 and C187–C198. A helical membrane pass occupies residues 77 to 97; that stretch reads FWVLQIIFVSVPTLLYLAHVF. Topologically, residues 98–155 are cytoplasmic; that stretch reads YVMRKEEKLNKKEEELKVAQTDGVNVDMHLKQIEIKKFKYGIEEHGKVKMRGGLLRTY. K144 is covalently cross-linked (Glycyl lysine isopeptide (Lys-Gly) (interchain with G-Cter in SUMO)). The helical transmembrane segment at 156–176 threads the bilayer; that stretch reads IISILFKSIFEVAFLLIQWYI. The Extracellular segment spans residues 177-207; sequence YGFSLSAVYTCKRDPCPHQVDCFLSRPTEKT. Residues 208-228 form a helical membrane-spanning segment; sequence IFIIFMLVVSLVSLALNIIEL. Residues 229–382 are Cytoplasmic-facing; sequence FYVFFKGVKD…SRPRPDDLEI (154 aa). K237 is covalently cross-linked (Glycyl lysine isopeptide (Lys-Gly) (interchain with G-Cter in SUMO)). The interaction with NOV stretch occupies residues 244 to 382; sequence SDPYHATSGA…SRPRPDDLEI (139 aa). Y247 carries the phosphotyrosine modification. Phosphoserine is present on residues S255 and S262. The interaction with UBQLN4 stretch occupies residues 264 to 382; the sequence is KYAYFNGCSS…SRPRPDDLEI (119 aa). Residue C271 is modified to S-nitrosocysteine. T275 is subject to Phosphothreonine. Phosphoserine occurs at positions 306 and 314. Over residues 317-332 the composition is skewed to polar residues; the sequence is QNRMGQAGSTISNSHA. Residues 317 to 382 are disordered; sequence QNRMGQAGST…SRPRPDDLEI (66 aa). S325 carries the phosphoserine; by CK1 modification. T326 bears the Phosphothreonine mark. Phosphoserine; by CK1 occurs at positions 328 and 330. S344 and S365 each carry phosphoserine. Residues 362 to 374 are compositionally biased toward low complexity; sequence RPSSRASSRASSR. Position 368 is a phosphoserine; by PKC/PRKCG and PKC/PRKCD (S368). Phosphoserine is present on residues S369 and S373.

This sequence belongs to the connexin family. Alpha-type (group II) subfamily. In terms of assembly, a connexon is composed of a hexamer of connexins. Interacts (via C-terminus) with TJP1. Interacts (via C-terminus) with SRC (via SH3 domain). Interacts (not ubiquitinated) with UBQLN4 (via UBA domain). Interacts with SGSM3 and CNST. Interacts with RIC1/CIP150. Interacts with CSNK1D. Interacts with NOV. Interacts with TMEM65. Interacts with ANK3/ANKG and PKP2. In terms of processing, phosphorylated at Ser-368 by PRKCG; phosphorylation induces disassembly of gap junction plaques and inhibition of gap junction activity. Phosphorylation at Ser-325, Ser-328 and Ser-330 by CK1 modulates gap junction assembly. Phosphorylation at Ser-368 by PRKCD triggers its internalization into small vesicles leading to proteasome-mediated degradation. Sumoylated with SUMO1, SUMO2 and SUMO3, which may regulate the level of functional Cx43 gap junctions at the plasma membrane. May be desumoylated by SENP1 or SENP2. Post-translationally, S-nitrosylation at Cys-271 is enriched at the muscle endothelial gap junction in arteries, it augments channel permeability and may regulate of smooth muscle cell to endothelial cell communication. In terms of processing, acetylated in the developing cortex; leading to delocalization from the cell membrane. In terms of tissue distribution, expressed at intercalated disks in the heart (at protein level). Expressed in the fetal cochlea.

The protein resides in the cell membrane. The protein localises to the cell junction. It localises to the gap junction. Its subcellular location is the endoplasmic reticulum. Functionally, gap junction protein that acts as a regulator of bladder capacity. A gap junction consists of a cluster of closely packed pairs of transmembrane channels, the connexons, through which materials of low MW diffuse from one cell to a neighboring cell. May play a critical role in the physiology of hearing by participating in the recycling of potassium to the cochlear endolymph. Negative regulator of bladder functional capacity: acts by enhancing intercellular electrical and chemical transmission, thus sensitizing bladder muscles to cholinergic neural stimuli and causing them to contract. May play a role in cell growth inhibition through the regulation of NOV expression and localization. Plays an essential role in gap junction communication in the ventricles. The protein is Gap junction alpha-1 protein (GJA1) of Homo sapiens (Human).